We begin with the raw amino-acid sequence, 283 residues long: Probable endonuclease 4 (283 aa).

9 residues coordinate Zn(2+): histidine 66, histidine 106, glutamate 141, aspartate 174, histidine 177, histidine 211, aspartate 224, histidine 226, and glutamate 256.

The protein belongs to the AP endonuclease 2 family. It depends on Zn(2+) as a cofactor.

It catalyses the reaction Endonucleolytic cleavage to 5'-phosphooligonucleotide end-products.. Functionally, endonuclease IV plays a role in DNA repair. It cleaves phosphodiester bonds at apurinic or apyrimidinic (AP) sites, generating a 3'-hydroxyl group and a 5'-terminal sugar phosphate. This Carboxydothermus hydrogenoformans (strain ATCC BAA-161 / DSM 6008 / Z-2901) protein is Probable endonuclease 4.